Consider the following 209-residue polypeptide: High frequency lysogenization protein HflD homolog (209 aa).

A coiled-coil region spans residues 95–132; that stretch reads LERKLAASKGAMNTLGNRIADLSRQLEHFELESDTLMS.

Belongs to the HflD family.

The protein resides in the cytoplasm. The protein localises to the cell inner membrane. The polypeptide is High frequency lysogenization protein HflD homolog (Cronobacter sakazakii (strain ATCC BAA-894) (Enterobacter sakazakii)).